The sequence spans 43 residues: Probable intron-encoded DNA endonuclease 2 (43 aa).

The protein belongs to the LAGLIDADG endonuclease family.

The protein resides in the mitochondrion. In terms of biological role, mitochondrial DNA endonuclease involved in intron homing. In Mycosarcoma maydis (Corn smut fungus), this protein is Probable intron-encoded DNA endonuclease 2 (hegI2).